The chain runs to 370 residues: Chorismate synthase (370 aa).

Residues R48 and R54 each contribute to the NADP(+) site. FMN-binding positions include 130–132 (RSS), 242–243 (NA), G287, 302–306 (KPTSS), and R328.

Belongs to the chorismate synthase family. Homotetramer. FMNH2 serves as cofactor.

It carries out the reaction 5-O-(1-carboxyvinyl)-3-phosphoshikimate = chorismate + phosphate. It functions in the pathway metabolic intermediate biosynthesis; chorismate biosynthesis; chorismate from D-erythrose 4-phosphate and phosphoenolpyruvate: step 7/7. In terms of biological role, catalyzes the anti-1,4-elimination of the C-3 phosphate and the C-6 proR hydrogen from 5-enolpyruvylshikimate-3-phosphate (EPSP) to yield chorismate, which is the branch point compound that serves as the starting substrate for the three terminal pathways of aromatic amino acid biosynthesis. This reaction introduces a second double bond into the aromatic ring system. This Xanthobacter autotrophicus (strain ATCC BAA-1158 / Py2) protein is Chorismate synthase.